The primary structure comprises 502 residues: D-alanine--D-alanyl carrier protein ligase (502 aa).

150 to 151 (TS) lines the ATP pocket. D-alanine is bound at residue aspartate 195. 290–295 (NTYGPT) is an ATP binding site. D-alanine is bound at residue valine 299. 2 residues coordinate ATP: aspartate 381 and lysine 490. Lysine 490 lines the D-alanine pocket.

The protein belongs to the ATP-dependent AMP-binding enzyme family. DltA subfamily.

The protein resides in the cytoplasm. The enzyme catalyses holo-[D-alanyl-carrier protein] + D-alanine + ATP = D-alanyl-[D-alanyl-carrier protein] + AMP + diphosphate. Its pathway is cell wall biogenesis; lipoteichoic acid biosynthesis. In terms of biological role, catalyzes the first step in the D-alanylation of lipoteichoic acid (LTA), the activation of D-alanine and its transfer onto the D-alanyl carrier protein (Dcp) DltC. In an ATP-dependent two-step reaction, forms a high energy D-alanyl-AMP intermediate, followed by transfer of the D-alanyl residue as a thiol ester to the phosphopantheinyl prosthetic group of the Dcp. D-alanylation of LTA plays an important role in modulating the properties of the cell wall in Gram-positive bacteria, influencing the net charge of the cell wall. This chain is D-alanine--D-alanyl carrier protein ligase, found in Bacillus licheniformis (strain ATCC 14580 / DSM 13 / JCM 2505 / CCUG 7422 / NBRC 12200 / NCIMB 9375 / NCTC 10341 / NRRL NRS-1264 / Gibson 46).